We begin with the raw amino-acid sequence, 208 residues long: FAS-associated death domain protein (208 aa).

One can recognise a DED domain in the interval 3-81 (PFLVLLHSVS…RHDLLRRVDD (79 aa)). In terms of domain architecture, Death spans 97-181 (LCAAFNVICD…LVADLVQEVQ (85 aa)). Arginine 117 carries (Microbial infection) N-beta-linked (GlcNAc) arginine glycosylation. Residues 187 to 208 (QNRSGAMSPMSWNSDASTSEAS) form a disordered region. Serine 194 carries the post-translational modification Phosphoserine.

As to quaternary structure, can self-associate. Component of the AIM2 PANoptosome complex, a multiprotein complex that drives inflammatory cell death (PANoptosis). Component of the death-induced signaling complex (DISC) composed of cell surface receptor FAS/CD95 or TNFRSF1A, adapter protein FADD and the CASP8 protease; recruitment of CASP8 to the complex is required for processing of CASP8 into the p18 and p10 subunits. Interacts (via death domain) with FAS (via death domain). Interacts directly (via DED domain) with NOL3 (via CARD domain); inhibits death-inducing signaling complex (DISC) assembly by inhibiting the increase in FAS-FADD binding induced by FAS activation. Interacts with CFLAR, PEA15 and MBD4. When phosphorylated, part of a complex containing HIPK3 and FAS. May interact with MAVS/IPS1. Interacts with MOCV v-CFLAR protein and PIDD1. Interacts with RIPK1 and TRADD. Interacts with stimulated TNFRSF10B. Interacts with DDX24. (Microbial infection) Interacts with human papillomavirus 16/HPV16 protein E6. In terms of assembly, (Microbial infection) Interacts with molluscum contagiosum virus proteins MC159L/v-CFLAR and MC160L. Post-translationally, (Microbial infection) Glycosylated at Arg-117 by enteropathogenic E.coli protein NleB1, C.rodentium protein NleB and S.typhimurium protein Ssek1: arginine GlcNAcylation prevents recruitment of caspase-8 or caspase-10 to the activated Fas (CD95) or TNFR-1 receptors. In terms of tissue distribution, expressed in a wide variety of tissues, except for peripheral blood mononuclear leukocytes.

Its subcellular location is the cytoplasm. Its function is as follows. Apoptotic adapter molecule that recruits caspases CASP8 or CASP10 to the activated FAS/CD95 or TNFRSF1A/TNFR-1 receptors. The resulting aggregate called the death-inducing signaling complex (DISC) performs CASP8 proteolytic activation. Active CASP8 initiates the subsequent cascade of caspases mediating apoptosis. Involved in interferon-mediated antiviral immune response, playing a role in the positive regulation of interferon signaling. This chain is FAS-associated death domain protein, found in Homo sapiens (Human).